The sequence spans 276 residues: Protein FAM151B (276 aa).

It belongs to the menorin family.

Functionally, essential for survival of retinal photoreceptor cells. This Homo sapiens (Human) protein is Protein FAM151B (FAM151B).